A 723-amino-acid chain; its full sequence is Catalase-peroxidase (723 aa).

Positions 98 to 226 form a cross-link, tryptophyl-tyrosyl-methioninium (Trp-Tyr) (with M-252); sequence WHAAGSYRAA…LAAVQMGLIY (129 aa). Catalysis depends on His-99, which acts as the Proton acceptor. Residues 226–252 constitute a cross-link (tryptophyl-tyrosyl-methioninium (Tyr-Met) (with W-98)); it reads YVNPEGVNGKPDPLKTAAQVRETFARM. A heme b-binding site is contributed by His-267. The disordered stretch occupies residues 267-286; the sequence is HTVGKTHGNGRAENLGPSPE.

This sequence belongs to the peroxidase family. Peroxidase/catalase subfamily. In terms of assembly, homodimer or homotetramer. Heme b is required as a cofactor. Formation of the three residue Trp-Tyr-Met cross-link is important for the catalase, but not the peroxidase activity of the enzyme.

The enzyme catalyses H2O2 + AH2 = A + 2 H2O. It carries out the reaction 2 H2O2 = O2 + 2 H2O. Functionally, bifunctional enzyme with both catalase and broad-spectrum peroxidase activity. This Thioalkalivibrio sulfidiphilus (strain HL-EbGR7) protein is Catalase-peroxidase.